A 402-amino-acid chain; its full sequence is Serine/threonine transporter SstT (402 aa).

A run of 8 helical transmembrane segments spans residues 17 to 37 (IAIG…ITVI), 44 to 64 (FVGG…ANAL), 78 to 98 (IIVL…ISHY), 138 to 158 (ALSQ…GFAM), 179 to 199 (IVRW…FDTI), 212 to 232 (VLIL…NPII), 295 to 315 (MAGA…TLGI), and 336 to 356 (ASGI…LFGI).

Belongs to the dicarboxylate/amino acid:cation symporter (DAACS) (TC 2.A.23) family.

It localises to the cell membrane. The catalysed reaction is L-serine(in) + Na(+)(in) = L-serine(out) + Na(+)(out). It catalyses the reaction L-threonine(in) + Na(+)(in) = L-threonine(out) + Na(+)(out). Functionally, involved in the import of serine and threonine into the cell, with the concomitant import of sodium (symport system). This chain is Serine/threonine transporter SstT, found in Streptococcus thermophilus (strain ATCC BAA-250 / LMG 18311).